Here is a 27-residue protein sequence, read N- to C-terminus: Fructokinase (27 aa).

This sequence belongs to the ROK (NagC/XylR) family. In terms of assembly, homodimer. The cofactor is Mg(2+).

The enzyme catalyses D-fructose + ATP = D-fructose 6-phosphate + ADP + H(+). Inhibition by zinc ions. The chain is Fructokinase from Fusobacterium mortiferum.